A 219-amino-acid chain; its full sequence is uncharacterized protein (219 aa).

This is an uncharacterized protein from Mycoplasma genitalium (strain ATCC 33530 / DSM 19775 / NCTC 10195 / G37) (Mycoplasmoides genitalium).